The chain runs to 239 residues: Ditrans,polycis-undecaprenyl-diphosphate synthase ((2E,6E)-farnesyl-diphosphate specific) (239 aa).

Asp18 is an active-site residue. Asp18 lines the Mg(2+) pocket. Substrate-binding positions include 19-22, Trp23, Arg31, His35, and 63-65; these read GNGR and SSE. Asn66 acts as the Proton acceptor in catalysis. Substrate is bound by residues Trp67, Arg69, Arg186, and 192–194; that span reads RIS. Glu205 lines the Mg(2+) pocket.

This sequence belongs to the UPP synthase family. In terms of assembly, homodimer. The cofactor is Mg(2+).

It catalyses the reaction 8 isopentenyl diphosphate + (2E,6E)-farnesyl diphosphate = di-trans,octa-cis-undecaprenyl diphosphate + 8 diphosphate. Its function is as follows. Catalyzes the sequential condensation of isopentenyl diphosphate (IPP) with (2E,6E)-farnesyl diphosphate (E,E-FPP) to yield (2Z,6Z,10Z,14Z,18Z,22Z,26Z,30Z,34E,38E)-undecaprenyl diphosphate (di-trans,octa-cis-UPP). UPP is the precursor of glycosyl carrier lipid in the biosynthesis of bacterial cell wall polysaccharide components such as peptidoglycan and lipopolysaccharide. The polypeptide is Ditrans,polycis-undecaprenyl-diphosphate synthase ((2E,6E)-farnesyl-diphosphate specific) (Haemophilus influenzae (strain ATCC 51907 / DSM 11121 / KW20 / Rd)).